The chain runs to 143 residues: D-aminoacyl-tRNA deacylase (143 aa).

The Gly-cisPro motif, important for rejection of L-amino acids signature appears at 135–136 (GP).

Belongs to the DTD family. In terms of assembly, homodimer.

The protein resides in the cytoplasm. The enzyme catalyses glycyl-tRNA(Ala) + H2O = tRNA(Ala) + glycine + H(+). The catalysed reaction is a D-aminoacyl-tRNA + H2O = a tRNA + a D-alpha-amino acid + H(+). Functionally, an aminoacyl-tRNA editing enzyme that deacylates mischarged D-aminoacyl-tRNAs. Also deacylates mischarged glycyl-tRNA(Ala), protecting cells against glycine mischarging by AlaRS. Acts via tRNA-based rather than protein-based catalysis; rejects L-amino acids rather than detecting D-amino acids in the active site. By recycling D-aminoacyl-tRNA to D-amino acids and free tRNA molecules, this enzyme counteracts the toxicity associated with the formation of D-aminoacyl-tRNA entities in vivo and helps enforce protein L-homochirality. This chain is D-aminoacyl-tRNA deacylase, found in Mycobacterium marinum (strain ATCC BAA-535 / M).